We begin with the raw amino-acid sequence, 216 residues long: 2-hydroxy-3-keto-5-methylthiopentenyl-1-phosphate phosphatase (216 aa).

Belongs to the HAD-like hydrolase superfamily. MtnX family.

It catalyses the reaction 2-hydroxy-5-methylsulfanyl-3-oxopent-1-enyl phosphate + H2O = 1,2-dihydroxy-5-(methylsulfanyl)pent-1-en-3-one + phosphate. It participates in amino-acid biosynthesis; L-methionine biosynthesis via salvage pathway; L-methionine from S-methyl-5-thio-alpha-D-ribose 1-phosphate: step 4/6. Its function is as follows. Dephosphorylates 2-hydroxy-3-keto-5-methylthiopentenyl-1-phosphate (HK-MTPenyl-1-P) yielding 1,2-dihydroxy-3-keto-5-methylthiopentene (DHK-MTPene). This Exiguobacterium sp. (strain ATCC BAA-1283 / AT1b) protein is 2-hydroxy-3-keto-5-methylthiopentenyl-1-phosphate phosphatase.